Consider the following 142-residue polypeptide: Small ribosomal subunit protein uS12z (142 aa).

At Pro-61 the chain carries Hydroxyproline.

The protein belongs to the universal ribosomal protein uS12 family.

The sequence is that of Small ribosomal subunit protein uS12z (RPS23A) from Arabidopsis thaliana (Mouse-ear cress).